The primary structure comprises 273 residues: tRNA (guanine-N(7)-)-methyltransferase (273 aa).

Residues Met1 to Asn31 are compositionally biased toward polar residues. A disordered region spans residues Met1–Asp36. 4 residues coordinate S-adenosyl-L-methionine: Glu105, Glu130, Asp157, and Asp179. Asp179 is a catalytic residue. Residues Lys183, Asp215, and Thr252–Glu255 each bind substrate.

It belongs to the class I-like SAM-binding methyltransferase superfamily. TrmB family.

The enzyme catalyses guanosine(46) in tRNA + S-adenosyl-L-methionine = N(7)-methylguanosine(46) in tRNA + S-adenosyl-L-homocysteine. It functions in the pathway tRNA modification; N(7)-methylguanine-tRNA biosynthesis. Catalyzes the formation of N(7)-methylguanine at position 46 (m7G46) in tRNA. This chain is tRNA (guanine-N(7)-)-methyltransferase, found in Psychrobacter cryohalolentis (strain ATCC BAA-1226 / DSM 17306 / VKM B-2378 / K5).